The chain runs to 156 residues: Ribosomal RNA large subunit methyltransferase H (156 aa).

S-adenosyl-L-methionine is bound by residues Leu-73, Gly-104, and 123–128 (LSKLTL).

It belongs to the RNA methyltransferase RlmH family. In terms of assembly, homodimer.

It is found in the cytoplasm. It carries out the reaction pseudouridine(1915) in 23S rRNA + S-adenosyl-L-methionine = N(3)-methylpseudouridine(1915) in 23S rRNA + S-adenosyl-L-homocysteine + H(+). In terms of biological role, specifically methylates the pseudouridine at position 1915 (m3Psi1915) in 23S rRNA. This chain is Ribosomal RNA large subunit methyltransferase H, found in Hydrogenovibrio crunogenus (strain DSM 25203 / XCL-2) (Thiomicrospira crunogena).